The primary structure comprises 123 residues: uncharacterized protein (123 aa).

Residues 34–53 (LPFFFLFLGNLGKFFFLWPL) traverse the membrane as a helical segment.

Its subcellular location is the membrane. This is an uncharacterized protein from Saccharomyces cerevisiae (strain ATCC 204508 / S288c) (Baker's yeast).